A 166-amino-acid chain; its full sequence is Interferon gamma (166 aa).

An N-terminal signal peptide occupies residues 1-23; that stretch reads MNYTTICLAFQLCVIFCSSGYYC. Gln24 carries the post-translational modification Pyrrolidone carboxylic acid. N-linked (GlcNAc...) asparagine glycosylation is found at Asn39, Asn106, and Asn107.

Belongs to the type II (or gamma) interferon family. Homodimer. Interacts with IFNGR1 (via extracellular domain); this interaction promotes IFNGR1 dimerization.

It is found in the secreted. Type II interferon produced by immune cells such as T-cells and NK cells that plays crucial roles in antimicrobial, antiviral, and antitumor responses by activating effector immune cells and enhancing antigen presentation. Primarily signals through the JAK-STAT pathway after interaction with its receptor IFNGR1 to affect gene regulation. Upon IFNG binding, IFNGR1 intracellular domain opens out to allow association of downstream signaling components JAK2, JAK1 and STAT1, leading to STAT1 activation, nuclear translocation and transcription of IFNG-regulated genes. Many of the induced genes are transcription factors such as IRF1 that are able to further drive regulation of a next wave of transcription. Plays a role in class I antigen presentation pathway by inducing a replacement of catalytic proteasome subunits with immunoproteasome subunits. In turn, increases the quantity, quality, and repertoire of peptides for class I MHC loading. Increases the efficiency of peptide generation also by inducing the expression of activator PA28 that associates with the proteasome and alters its proteolytic cleavage preference. Up-regulates as well MHC II complexes on the cell surface by promoting expression of several key molecules such as cathepsins B/CTSB, H/CTSH, and L/CTSL. Participates in the regulation of hematopoietic stem cells during development and under homeostatic conditions by affecting their development, quiescence, and differentiation. This is Interferon gamma (IFNG) from Mustela putorius furo (European domestic ferret).